A 615-amino-acid polypeptide reads, in one-letter code: Dihydroxy-acid dehydratase (615 aa).

Aspartate 83 lines the Mg(2+) pocket. Residue cysteine 124 participates in [2Fe-2S] cluster binding. The Mg(2+) site is built by aspartate 125 and lysine 126. The residue at position 126 (lysine 126) is an N6-carboxylysine. A [2Fe-2S] cluster-binding site is contributed by cysteine 199. Glutamate 495 serves as a coordination point for Mg(2+). Catalysis depends on serine 521, which acts as the Proton acceptor.

Belongs to the IlvD/Edd family. As to quaternary structure, homodimer. Requires [2Fe-2S] cluster as cofactor. Mg(2+) serves as cofactor.

It catalyses the reaction (2R)-2,3-dihydroxy-3-methylbutanoate = 3-methyl-2-oxobutanoate + H2O. The catalysed reaction is (2R,3R)-2,3-dihydroxy-3-methylpentanoate = (S)-3-methyl-2-oxopentanoate + H2O. It functions in the pathway amino-acid biosynthesis; L-isoleucine biosynthesis; L-isoleucine from 2-oxobutanoate: step 3/4. The protein operates within amino-acid biosynthesis; L-valine biosynthesis; L-valine from pyruvate: step 3/4. Its function is as follows. Functions in the biosynthesis of branched-chain amino acids. Catalyzes the dehydration of (2R,3R)-2,3-dihydroxy-3-methylpentanoate (2,3-dihydroxy-3-methylvalerate) into 2-oxo-3-methylpentanoate (2-oxo-3-methylvalerate) and of (2R)-2,3-dihydroxy-3-methylbutanoate (2,3-dihydroxyisovalerate) into 2-oxo-3-methylbutanoate (2-oxoisovalerate), the penultimate precursor to L-isoleucine and L-valine, respectively. In Corynebacterium jeikeium (strain K411), this protein is Dihydroxy-acid dehydratase.